Consider the following 373-residue polypeptide: Anhydro-N-acetylmuramic acid kinase (373 aa).

13 to 20 (GTSMDGID) lines the ATP pocket.

This sequence belongs to the anhydro-N-acetylmuramic acid kinase family.

It carries out the reaction 1,6-anhydro-N-acetyl-beta-muramate + ATP + H2O = N-acetyl-D-muramate 6-phosphate + ADP + H(+). It functions in the pathway amino-sugar metabolism; 1,6-anhydro-N-acetylmuramate degradation. Its pathway is cell wall biogenesis; peptidoglycan recycling. Functionally, catalyzes the specific phosphorylation of 1,6-anhydro-N-acetylmuramic acid (anhMurNAc) with the simultaneous cleavage of the 1,6-anhydro ring, generating MurNAc-6-P. Is required for the utilization of anhMurNAc either imported from the medium or derived from its own cell wall murein, and thus plays a role in cell wall recycling. This Brucella abortus (strain 2308) protein is Anhydro-N-acetylmuramic acid kinase.